Here is a 35-residue protein sequence, read N- to C-terminus: U1-theraphotoxin-Hhn1a (35 aa).

Disulfide bonds link Cys2-Cys16, Cys9-Cys21, and Cys15-Cys28.

Belongs to the neurotoxin 10 (Hwtx-1) family. 24 (Hwtx-6) subfamily. As to expression, expressed by the venom gland.

It localises to the secreted. Its function is as follows. Gating-modifier toxin that dose-dependently inhibits inactivation of voltage-gated sodium channels and reduces the peak of sodium current in cockroach DUM neurons. In vivo, reversibly paralyzes cockroaches for several hours, paralyzes rat after intracerebroventricular injection and blocks the neuromuscular transmission of the isolated rat phrenic nerve-diaphragm preparation. This is U1-theraphotoxin-Hhn1a from Cyriopagopus hainanus (Chinese bird spider).